Consider the following 373-residue polypeptide: Leucine aminopeptidase 1 (373 aa).

Positions 1–18 (MKFISVLALGATATSVLG) are cleaved as a signal peptide. Residues H176 and D195 each contribute to the Zn(2+) site. N-linked (GlcNAc...) asparagine glycosylation is present at N196. The Zn(2+) site is built by E234 and D261. N286 carries N-linked (GlcNAc...) asparagine glycosylation. A disulfide bridge links C310 with C314. Position 343 (H343) interacts with Zn(2+).

It belongs to the peptidase M28 family. M28E subfamily. Monomer. The cofactor is Zn(2+).

It is found in the secreted. Extracellular aminopeptidase which contributes to pathogenicity. In Arthroderma otae (strain ATCC MYA-4605 / CBS 113480) (Microsporum canis), this protein is Leucine aminopeptidase 1 (LAP1).